We begin with the raw amino-acid sequence, 214 residues long: Cdc42 effector protein 2 (214 aa).

Ser-2 is subject to N-acetylserine. One can recognise a CRIB domain in the interval 30-44 (ISPPLGDFRHTIHIG). Residues Ser-31, Ser-101, Ser-137, Ser-141, and Ser-145 each carry the phosphoserine modification. Residues 119 to 177 (LTLPTAQAPPKPPRLHLESPQPSPQPSPQGAGNVDVWRIPEAGSPHNGMSPEPEAEEPF) are disordered.

It belongs to the BORG/CEP family. Interacts with CDC42 and RHOQ in a GTP-dependent manner, and with SEPT7.

Its subcellular location is the endomembrane system. It localises to the cytoplasm. The protein localises to the cytoskeleton. Functionally, probably involved in the organization of the actin cytoskeleton. May act downstream of CDC42 to induce actin filament assembly leading to cell shape changes. Induces pseudopodia formation in fibroblasts in a CDC42-dependent manner. The chain is Cdc42 effector protein 2 (Cdc42ep2) from Mus musculus (Mouse).